The chain runs to 82 residues: Vejovine (82 aa).

A signal peptide spans 1 to 22; sequence MNAKTLFVVFLIGMLVTEQVEA. Positions 70 to 82 are excised as a propeptide; the sequence is MTLDEIVDAMYYD.

The protein belongs to the non-disulfide-bridged peptide (NDBP) superfamily. Long chain multifunctional peptide (group 2) family. Expressed by the venom gland.

The protein resides in the secreted. Its subcellular location is the target cell membrane. Its function is as follows. Displays significant potent antimicrobial activity against clinical isolates of Gram-negative multidrug resistant strains of E.coli, P.aeruginosa and A.baumanii with MIC values as low as 4.4 uM. Additionally, it displays low cytolytic and hemolytic activity against human erythrocytes reaching 50% hemolysis at 100 uM. This is Vejovine from Vaejovis mexicanus (Mexican scorpion).